A 178-amino-acid polypeptide reads, in one-letter code: Acireductone dioxygenase (178 aa).

Fe(2+)-binding residues include histidine 82, histidine 84, glutamate 88, and histidine 127. Residues histidine 82, histidine 84, glutamate 88, and histidine 127 each contribute to the Ni(2+) site. Serine 157 bears the Phosphoserine mark.

The protein belongs to the acireductone dioxygenase (ARD) family. Fe(2+) is required as a cofactor. The cofactor is Ni(2+).

The protein localises to the cytoplasm. It localises to the nucleus. The enzyme catalyses 1,2-dihydroxy-5-(methylsulfanyl)pent-1-en-3-one + O2 = 4-methylsulfanyl-2-oxobutanoate + formate + 2 H(+). It carries out the reaction 1,2-dihydroxy-5-(methylsulfanyl)pent-1-en-3-one + O2 = 3-(methylsulfanyl)propanoate + CO + formate + 2 H(+). Its pathway is amino-acid biosynthesis; L-methionine biosynthesis via salvage pathway; L-methionine from S-methyl-5-thio-alpha-D-ribose 1-phosphate: step 5/6. Catalyzes 2 different reactions between oxygen and the acireductone 1,2-dihydroxy-3-keto-5-methylthiopentene (DHK-MTPene) depending upon the metal bound in the active site. Fe-containing acireductone dioxygenase (Fe-ARD) produces formate and 2-keto-4-methylthiobutyrate (KMTB), the alpha-ketoacid precursor of methionine in the methionine recycle pathway. Ni-containing acireductone dioxygenase (Ni-ARD) produces methylthiopropionate, carbon monoxide and formate, and does not lie on the methionine recycle pathway. The chain is Acireductone dioxygenase (adi1) from Schizosaccharomyces pombe (strain 972 / ATCC 24843) (Fission yeast).